The chain runs to 415 residues: Serine hydroxymethyltransferase 1 (415 aa).

(6S)-5,6,7,8-tetrahydrofolate is bound by residues leucine 122 and 126–128 (GHL). Lysine 230 bears the N6-(pyridoxal phosphate)lysine mark.

This sequence belongs to the SHMT family. In terms of assembly, homodimer. Pyridoxal 5'-phosphate serves as cofactor.

The protein localises to the cytoplasm. The catalysed reaction is (6R)-5,10-methylene-5,6,7,8-tetrahydrofolate + glycine + H2O = (6S)-5,6,7,8-tetrahydrofolate + L-serine. It participates in one-carbon metabolism; tetrahydrofolate interconversion. It functions in the pathway amino-acid biosynthesis; glycine biosynthesis; glycine from L-serine: step 1/1. Its function is as follows. Catalyzes the reversible interconversion of serine and glycine with tetrahydrofolate (THF) serving as the one-carbon carrier. This reaction serves as the major source of one-carbon groups required for the biosynthesis of purines, thymidylate, methionine, and other important biomolecules. Also exhibits THF-independent aldolase activity toward beta-hydroxyamino acids, producing glycine and aldehydes, via a retro-aldol mechanism. This Ralstonia nicotianae (strain ATCC BAA-1114 / GMI1000) (Ralstonia solanacearum) protein is Serine hydroxymethyltransferase 1.